Reading from the N-terminus, the 749-residue chain is Chaperone protein dnaK3 (749 aa).

Phosphothreonine; by autocatalysis is present on Thr-198. 3 stretches are compositionally biased toward basic and acidic residues: residues 643–653, 661–694, and 711–724; these read RWDADPWDRSR, YDDRRSPVSDPYRGERWVEEQTSMSRREPVRDRN, and PTWEEDQPPRRDRS. The interval 643 to 749 is disordered; that stretch reads RWDADPWDRS…GWDDDDDEWF (107 aa). The segment covering 740 to 749 has biased composition (acidic residues); that stretch reads GWDDDDDEWF.

Belongs to the heat shock protein 70 family.

Its function is as follows. Acts as a chaperone. This Synechococcus elongatus (strain ATCC 33912 / PCC 7942 / FACHB-805) (Anacystis nidulans R2) protein is Chaperone protein dnaK3 (dnaK3).